A 411-amino-acid polypeptide reads, in one-letter code: Pyridinium-3,5-bisthiocarboxylic acid mononucleotide nickel insertion protein (411 aa).

This sequence belongs to the LarC family.

The catalysed reaction is Ni(II)-pyridinium-3,5-bisthiocarboxylate mononucleotide = pyridinium-3,5-bisthiocarboxylate mononucleotide + Ni(2+). Involved in the biosynthesis of a nickel-pincer cofactor ((SCS)Ni(II) pincer complex). Binds Ni(2+), and functions in nickel delivery to pyridinium-3,5-bisthiocarboxylic acid mononucleotide (P2TMN), to form the mature cofactor. Is thus probably required for the activation of nickel-pincer cofactor-dependent enzymes. This chain is Pyridinium-3,5-bisthiocarboxylic acid mononucleotide nickel insertion protein, found in Geobacillus kaustophilus (strain HTA426).